The chain runs to 165 residues: Large ribosomal subunit protein uL30 (165 aa).

It belongs to the universal ribosomal protein uL30 family. As to quaternary structure, part of the 50S ribosomal subunit.

The polypeptide is Large ribosomal subunit protein uL30 (Thermoplasma acidophilum (strain ATCC 25905 / DSM 1728 / JCM 9062 / NBRC 15155 / AMRC-C165)).